Consider the following 762-residue polypeptide: Phosphoribosylformylglycinamidine synthase subunit PurL (762 aa).

Histidine 58 is an active-site residue. Tyrosine 61 and arginine 105 together coordinate ATP. Glutamate 107 provides a ligand contact to Mg(2+). Substrate-binding positions include serine 108–histidine 111 and arginine 130. The active-site Proton acceptor is histidine 109. Residue aspartate 131 coordinates Mg(2+). A substrate-binding site is contributed by glutamine 255. Aspartate 283 is a Mg(2+) binding site. Glutamate 327–glutamine 329 contacts substrate. Residues asparagine 513 and glycine 550 each coordinate ATP. Position 551 (asparagine 551) interacts with Mg(2+). Serine 553 is a substrate binding site.

Belongs to the FGAMS family. In terms of assembly, monomer. Part of the FGAM synthase complex composed of 1 PurL, 1 PurQ and 2 PurS subunits.

Its subcellular location is the cytoplasm. It carries out the reaction N(2)-formyl-N(1)-(5-phospho-beta-D-ribosyl)glycinamide + L-glutamine + ATP + H2O = 2-formamido-N(1)-(5-O-phospho-beta-D-ribosyl)acetamidine + L-glutamate + ADP + phosphate + H(+). Its pathway is purine metabolism; IMP biosynthesis via de novo pathway; 5-amino-1-(5-phospho-D-ribosyl)imidazole from N(2)-formyl-N(1)-(5-phospho-D-ribosyl)glycinamide: step 1/2. Functionally, part of the phosphoribosylformylglycinamidine synthase complex involved in the purines biosynthetic pathway. Catalyzes the ATP-dependent conversion of formylglycinamide ribonucleotide (FGAR) and glutamine to yield formylglycinamidine ribonucleotide (FGAM) and glutamate. The FGAM synthase complex is composed of three subunits. PurQ produces an ammonia molecule by converting glutamine to glutamate. PurL transfers the ammonia molecule to FGAR to form FGAM in an ATP-dependent manner. PurS interacts with PurQ and PurL and is thought to assist in the transfer of the ammonia molecule from PurQ to PurL. This is Phosphoribosylformylglycinamidine synthase subunit PurL from Corynebacterium glutamicum (strain R).